We begin with the raw amino-acid sequence, 1012 residues long: DNA polymerase catalytic subunit (1012 aa).

Belongs to the DNA polymerase type-B family.

Its subcellular location is the host nucleus. It catalyses the reaction DNA(n) + a 2'-deoxyribonucleoside 5'-triphosphate = DNA(n+1) + diphosphate. The sequence is that of DNA polymerase catalytic subunit (U38) from Homo sapiens (Human).